A 705-amino-acid chain; its full sequence is Kinesin-like protein KIF2A (705 aa).

Residues 65 to 185 (DLVPDEDIEP…QQELREKRAQ (121 aa)) are disordered. Residue Ser-75 is modified to Phosphoserine. Thr-96 carries the phosphothreonine modification. Ser-99 is subject to Phosphoserine. Residue Lys-101 is modified to N6-acetyllysine. Polar residues predominate over residues 122–139 (LPEQSSSAQQNGSVSDIS). Residues Ser-134 and Ser-139 each carry the phosphoserine modification. A coiled-coil region spans residues 153 to 186 (RRKSNCVKEVEKLQEKREKRRLQQQELREKRAQD). Over residues 158-185 (CVKEVEKLQEKREKRRLQQQELREKRAQ) the composition is skewed to basic and acidic residues. The Kinesin motor domain occupies 222-552 (RICVCVRKRP…LRYANRVKEL (331 aa)). 312 to 319 (GQTGSGKT) serves as a coordination point for ATP. Residue Gln-572 is modified to Phosphoserine. Residues 659 to 698 (ATQLEAILEQKIDILTELRDKVKSFRAALQEEEQASKQIN) adopt a coiled-coil conformation.

This sequence belongs to the TRAFAC class myosin-kinesin ATPase superfamily. Kinesin family. MCAK/KIF2 subfamily. As to quaternary structure, interacts with AURKA and PLK1. Interacts with PSRC1. Interacts with MCRS1; the interaction enhances recruitment of KIF2A to the minus ends of spindle microtubules which promotes chromosome alignment.

It localises to the cytoplasm. Its subcellular location is the cytoskeleton. The protein localises to the microtubule organizing center. It is found in the centrosome. The protein resides in the spindle pole. It localises to the spindle. In terms of biological role, plus end-directed microtubule-dependent motor required for normal brain development. May regulate microtubule dynamics during axonal growth. Required for normal progression through mitosis. Required for normal congress of chromosomes at the metaphase plate. Required for normal spindle dynamics during mitosis. Promotes spindle turnover. Implicated in formation of bipolar mitotic spindles. Has microtubule depolymerization activity. The protein is Kinesin-like protein KIF2A of Rattus norvegicus (Rat).